A 595-amino-acid chain; its full sequence is Aspartate--tRNA ligase (595 aa).

Residue E171 participates in L-aspartate binding. The aspartate stretch occupies residues 195–198 (QLFK). R217 serves as a coordination point for L-aspartate. Residues 217 to 219 (RDE) and Q226 contribute to the ATP site. H448 provides a ligand contact to L-aspartate. ATP is bound at residue E482. R489 contributes to the L-aspartate binding site. Residue 534-537 (GLDR) coordinates ATP.

Belongs to the class-II aminoacyl-tRNA synthetase family. Type 1 subfamily. Homodimer.

Its subcellular location is the cytoplasm. It carries out the reaction tRNA(Asp) + L-aspartate + ATP = L-aspartyl-tRNA(Asp) + AMP + diphosphate. Its function is as follows. Catalyzes the attachment of L-aspartate to tRNA(Asp) in a two-step reaction: L-aspartate is first activated by ATP to form Asp-AMP and then transferred to the acceptor end of tRNA(Asp). The protein is Aspartate--tRNA ligase of Erwinia tasmaniensis (strain DSM 17950 / CFBP 7177 / CIP 109463 / NCPPB 4357 / Et1/99).